The chain runs to 475 residues: Probable pectate lyase 7 (475 aa).

The signal sequence occupies residues 1–24 (METARLFKLVCVICIASLIPTIRA). N-linked (GlcNAc...) asparagine glycosylation is found at Asn67 and Asn96. Positions 91–117 (ISSPTNSTRRSLTGRGKGKGKGKWSKL) are disordered. 3 residues coordinate Ca(2+): Asp271, Asp295, and Asp299. Arg351 is a catalytic residue.

It belongs to the polysaccharide lyase 1 family. Requires Ca(2+) as cofactor.

The catalysed reaction is Eliminative cleavage of (1-&gt;4)-alpha-D-galacturonan to give oligosaccharides with 4-deoxy-alpha-D-galact-4-enuronosyl groups at their non-reducing ends.. Its pathway is glycan metabolism; pectin degradation; 2-dehydro-3-deoxy-D-gluconate from pectin: step 2/5. The sequence is that of Probable pectate lyase 7 from Arabidopsis thaliana (Mouse-ear cress).